We begin with the raw amino-acid sequence, 430 residues long: Replication protein A 32 kDa subunit C (430 aa).

The segment at 14–46 is disordered; it reads MPSQRSGAPAPEYSAAGTGAAAAPSPSKPRDPR. Positions 23 to 38 are enriched in low complexity; it reads APEYSAAGTGAAAAPS. Positions 86–160 form a DNA-binding region, OB; it reads VRVLGRVVSV…QGLARSIRPI (75 aa).

Belongs to the replication factor A protein 2 family. As to quaternary structure, heterotrimer of RPA1, RPA2 and RPA3 (canonical replication protein A complex). Interacts with RPA1C and RPA3. Post-translationally, phosphorylated in a cell-cycle-dependent manner (from the S phase until mitosis). In response to DNA damage, recruited to DNA-repair nuclear foci, as a hypophosphorylated form.

The protein resides in the nucleus. Its function is as follows. Component of the replication protein A complex (RPA) required for DNA recombination, repair and replication. The activity of RPA is mediated by single-stranded DNA binding and protein interactions. This is Replication protein A 32 kDa subunit C (RPA2C) from Oryza sativa subsp. japonica (Rice).